The sequence spans 90 residues: Small ribosomal subunit protein uS15c (90 aa).

The span at Met1 to Ser11 shows a compositional bias: polar residues. Positions Met1–Gly20 are disordered.

Belongs to the universal ribosomal protein uS15 family. Part of the 30S ribosomal subunit.

Its subcellular location is the plastid. The protein resides in the chloroplast. This Cucumis sativus (Cucumber) protein is Small ribosomal subunit protein uS15c (rps15).